Here is a 491-residue protein sequence, read N- to C-terminus: Protein translocase subunit SecY (491 aa).

Residues 1 to 20 (MGWKEAAAPVLTRMPAVERP) lie on the Cytoplasmic side of the membrane. Residues 21–47 (EGHVPFRRKMYWTGGVLVLYFFLTNVP) form a helical membrane-spanning segment. Residues 48 to 58 (LWGIQTAGNDF) lie on the Extracellular side of the membrane. The segment at residues 59–66 (FGQFRSLL) is an intramembrane region (helical). The chain crosses the membrane as a discontinuously helical span at residues 59–87 (FGQFRSLLAGGQGTVLQLGIGPIVTASIV). Residues 67 to 78 (AGGQGTVLQLGI) lie within the membrane without spanning it. Positions 79 to 87 (GPIVTASIV) form an intramembrane region, helical. At 88–109 (LQLLGGANLLGLDTDNDPRDQA) the chain is on the cytoplasmic side. The helical transmembrane segment at 110 to 134 (IYQGLQKFLVGVMVVLTGAPMVFLG) threads the bilayer. Residues 135 to 152 (NFLQPSQQLAQSMPGGAF) are Extracellular-facing. Residues 153 to 177 (GVEVLIFAQIAAGGILLLFMDEVIS) traverse the membrane as a helical segment. The Cytoplasmic segment spans residues 178 to 183 (KWGVGS). A helical transmembrane segment spans residues 184 to 202 (GIGLFIVAGVSQSLVGGLV). Topologically, residues 203–244 (FWEGGVGSQGLLPTWFDIIVGNVSNMPPLLSGSGIEFLLMQA) are extracellular. The helical transmembrane segment at 245–266 (GILGLLTTLFIYVVVVYAESVR) threads the bilayer. The Cytoplasmic segment spans residues 267 to 291 (VEIPLSHARVKGARGRFPVKLIYAS). The chain crosses the membrane as a helical span at residues 292 to 313 (VLPMILVRALQANIQFLGQILN). At 314–365 (STLASMPTWLGVYGGNGQVTGGLFYYLAPIYSPNAWMWWTSGATAARWQVLI) the chain is on the extracellular side. The chain crosses the membrane as a helical span at residues 366-385 (RIAIDLSFMIIGGAIFAIFW). The Cytoplasmic portion of the chain corresponds to 386–428 (VETADMGPDATARQIQNSGMQIPGFRKNQGVIEKVMERYIPQV). Residues 429–447 (TVIGGALVGLLAVMANMLG) form a helical membrane-spanning segment. The Extracellular segment spans residues 448–452 (TIGNV). The chain crosses the membrane as a helical span at residues 453 to 467 (SGTGLLLTISITYKL). At 468–491 (YEEIAEEQMMEMHPMMREMFGGGD) the chain is on the cytoplasmic side.

It belongs to the SecY/SEC61-alpha family. Component of the Sec protein translocase complex. Heterotrimer consisting of alpha (SecY), beta (SecG) and gamma (SecE) subunits. The heterotrimers can form oligomers, although 1 heterotrimer is thought to be able to translocate proteins. Interacts with the ribosome. May interact with SecDF, and other proteins may be involved.

It localises to the cell membrane. The central subunit of the protein translocation channel SecYEG. Consists of two halves formed by TMs 1-5 and 6-10. These two domains form a lateral gate at the front which open onto the bilayer between TMs 2 and 7, and are clamped together by SecE at the back. The channel is closed by both a pore ring composed of hydrophobic SecY resides and a short helix (helix 2A) on the extracellular side of the membrane which forms a plug. The plug probably moves laterally to allow the channel to open. The ring and the pore may move independently. This Halobacterium salinarum (strain ATCC 700922 / JCM 11081 / NRC-1) (Halobacterium halobium) protein is Protein translocase subunit SecY.